Consider the following 156-residue polypeptide: Ribosomal RNA large subunit methyltransferase H (156 aa).

Residues Leu73, Gly104, and 123-128 contribute to the S-adenosyl-L-methionine site; that span reads LSPLTL.

It belongs to the RNA methyltransferase RlmH family. Homodimer.

The protein localises to the cytoplasm. The enzyme catalyses pseudouridine(1915) in 23S rRNA + S-adenosyl-L-methionine = N(3)-methylpseudouridine(1915) in 23S rRNA + S-adenosyl-L-homocysteine + H(+). In terms of biological role, specifically methylates the pseudouridine at position 1915 (m3Psi1915) in 23S rRNA. The protein is Ribosomal RNA large subunit methyltransferase H of Pectobacterium carotovorum subsp. carotovorum (strain PC1).